The sequence spans 302 residues: MKIAILATNPHLYSHKRLKAEAEAAGHEVKIINPLYCYMNVAASNPKVHYRGGAPLPHFDAVIPRIGASITYYGTAVLRHMETMGMYTLNESIAISRSRDKFRSLQLLARKGIPMPLTSFAQSPDDTEDLIHMVGGAPLVIKLLEGTQGKGVILADSHQSAVSIINAFKEMHANILVQEFIEESRGTDIRCFVIGEKVVAAVKRQAKDGEFRANVHQGGKAVKVKLSPQERAIAVSAAKTMGLRVAGVDLIRSNHGPLVLEINSSPGLEGIEKATNINLAGKIIEYIEKKAKPISSNHRFHG.

Residues 105-288 (LQLLARKGIP…LAGKIIEYIE (184 aa)) form the ATP-grasp domain. Residues Lys142, 179–180 (EF), Asp188, and 212–214 (RAN) each bind ATP. 3 residues coordinate Mg(2+): Asp249, Glu261, and Asn263. Mn(2+) contacts are provided by Asp249, Glu261, and Asn263.

This sequence belongs to the RimK family. The cofactor is Mg(2+). Mn(2+) serves as cofactor.

The chain is Probable alpha-L-glutamate ligase from Legionella pneumophila (strain Paris).